Reading from the N-terminus, the 382-residue chain is D-alanine--D-alanine ligase (382 aa).

The 210-residue stretch at 139-348 (KRLMRDAGLP…PPALMDALIA (210 aa)) folds into the ATP-grasp domain. 168–223 (EALESRTLFVKPANMGSSVGVSRVADAGQFDQALAHAFAYDEKILIERAVPRAREI) contributes to the ATP binding site. Mg(2+) is bound by residues aspartate 300, glutamate 315, and asparagine 317.

This sequence belongs to the D-alanine--D-alanine ligase family. Mg(2+) serves as cofactor. Mn(2+) is required as a cofactor.

It is found in the cytoplasm. It carries out the reaction 2 D-alanine + ATP = D-alanyl-D-alanine + ADP + phosphate + H(+). It participates in cell wall biogenesis; peptidoglycan biosynthesis. Cell wall formation. The protein is D-alanine--D-alanine ligase of Methylobacterium sp. (strain 4-46).